Reading from the N-terminus, the 291-residue chain is Small ribosomal subunit protein uS2 (291 aa).

Residues 256–291 (STTAPPNWEATGGDWATSTAPAEGWAGDAPAGETKW) form a disordered region.

This sequence belongs to the universal ribosomal protein uS2 family. As to quaternary structure, component of the small ribosomal subunit. Mature ribosomes consist of a small (40S) and a large (60S) subunit. The 40S subunit contains about 33 different proteins and 1 molecule of RNA (18S). The 60S subunit contains about 49 different proteins and 3 molecules of RNA (25S, 5.8S and 5S). Interacts with RPS21.

It is found in the cytoplasm. In terms of biological role, required for the assembly and/or stability of the 40S ribosomal subunit. Required for the processing of the 20S rRNA-precursor to mature 18S rRNA in a late step of the maturation of 40S ribosomal subunits. This chain is Small ribosomal subunit protein uS2, found in Coccidioides immitis (strain RS) (Valley fever fungus).